The primary structure comprises 957 residues: Glycine dehydrogenase (decarboxylating) (957 aa).

Position 708 is an N6-(pyridoxal phosphate)lysine (K708).

This sequence belongs to the GcvP family. As to quaternary structure, the glycine cleavage system is composed of four proteins: P, T, L and H. Pyridoxal 5'-phosphate serves as cofactor.

The enzyme catalyses N(6)-[(R)-lipoyl]-L-lysyl-[glycine-cleavage complex H protein] + glycine + H(+) = N(6)-[(R)-S(8)-aminomethyldihydrolipoyl]-L-lysyl-[glycine-cleavage complex H protein] + CO2. In terms of biological role, the glycine cleavage system catalyzes the degradation of glycine. The P protein binds the alpha-amino group of glycine through its pyridoxal phosphate cofactor; CO(2) is released and the remaining methylamine moiety is then transferred to the lipoamide cofactor of the H protein. This Shigella boydii serotype 4 (strain Sb227) protein is Glycine dehydrogenase (decarboxylating).